The primary structure comprises 546 residues: Oncoprotein-induced transcript 3 protein (546 aa).

A signal peptide spans 1-19 (MPLSLLLTCLSTTVTLVSP). 2 N-linked (GlcNAc...) asparagine glycosylation sites follow: asparagine 89 and asparagine 116. One can recognise an EGF-like; calcium-binding domain in the interval 182 to 222 (DENECEHNNGGCSEICVNLKNSHRCACGVGRVLRSDGKTCE). Cystine bridges form between cysteine 186-cysteine 197, cysteine 193-cysteine 206, and cysteine 208-cysteine 221. The 256-residue stretch at 261–516 (TCQVPVLCKS…SRCAQGCHRR (256 aa)) folds into the ZP domain. N-linked (GlcNAc...) asparagine glycosylation occurs at asparagine 299.

In terms of tissue distribution, liver-specific. Expressed only in the hepatocytes.

It is found in the nucleus envelope. In terms of biological role, may be involved in hepatocellular function and development. The protein is Oncoprotein-induced transcript 3 protein (Oit3) of Mus musculus (Mouse).